Here is a 129-residue protein sequence, read N- to C-terminus: Sulfurtransferase TusD (129 aa).

The active-site Cysteine persulfide intermediate is Cys-79.

This sequence belongs to the DsrE/TusD family. In terms of assembly, heterohexamer, formed by a dimer of trimers. The hexameric TusBCD complex contains 2 copies each of TusB, TusC and TusD. The TusBCD complex interacts with TusE.

It localises to the cytoplasm. Part of a sulfur-relay system required for 2-thiolation of 5-methylaminomethyl-2-thiouridine (mnm(5)s(2)U) at tRNA wobble positions. Accepts sulfur from TusA and transfers it in turn to TusE. This chain is Sulfurtransferase TusD, found in Pectobacterium carotovorum subsp. carotovorum (strain PC1).